A 562-amino-acid polypeptide reads, in one-letter code: 2-succinyl-5-enolpyruvyl-6-hydroxy-3-cyclohexene-1-carboxylate synthase (562 aa).

The protein belongs to the TPP enzyme family. MenD subfamily. In terms of assembly, homodimer. It depends on Mg(2+) as a cofactor. Mn(2+) serves as cofactor. Requires thiamine diphosphate as cofactor.

It catalyses the reaction isochorismate + 2-oxoglutarate + H(+) = 5-enolpyruvoyl-6-hydroxy-2-succinyl-cyclohex-3-ene-1-carboxylate + CO2. Its pathway is quinol/quinone metabolism; 1,4-dihydroxy-2-naphthoate biosynthesis; 1,4-dihydroxy-2-naphthoate from chorismate: step 2/7. It functions in the pathway cofactor biosynthesis; phylloquinone biosynthesis. Its function is as follows. Catalyzes the thiamine diphosphate-dependent decarboxylation of 2-oxoglutarate and the subsequent addition of the resulting succinic semialdehyde-thiamine pyrophosphate anion to isochorismate to yield 2-succinyl-5-enolpyruvyl-6-hydroxy-3-cyclohexene-1-carboxylate (SEPHCHC). The polypeptide is 2-succinyl-5-enolpyruvyl-6-hydroxy-3-cyclohexene-1-carboxylate synthase (Thermosynechococcus vestitus (strain NIES-2133 / IAM M-273 / BP-1)).